A 285-amino-acid chain; its full sequence is Bifunctional protein FolD (285 aa).

NADP(+)-binding positions include 163–165 (GRS) and Ser188.

This sequence belongs to the tetrahydrofolate dehydrogenase/cyclohydrolase family. As to quaternary structure, homodimer.

The enzyme catalyses (6R)-5,10-methylene-5,6,7,8-tetrahydrofolate + NADP(+) = (6R)-5,10-methenyltetrahydrofolate + NADPH. It carries out the reaction (6R)-5,10-methenyltetrahydrofolate + H2O = (6R)-10-formyltetrahydrofolate + H(+). It functions in the pathway one-carbon metabolism; tetrahydrofolate interconversion. Functionally, catalyzes the oxidation of 5,10-methylenetetrahydrofolate to 5,10-methenyltetrahydrofolate and then the hydrolysis of 5,10-methenyltetrahydrofolate to 10-formyltetrahydrofolate. The chain is Bifunctional protein FolD from Lactococcus lactis subsp. cremoris (strain MG1363).